Reading from the N-terminus, the 152-residue chain is Lipoprotein signal peptidase (152 aa).

3 helical membrane-spanning segments follow: residues 5–25, 61–81, and 84–104; these read LFVL…FWIV, WFFV…LATH, and LNIW…GNFI. Catalysis depends on residues Asp-114 and Asp-130. Residues 125–145 form a helical membrane-spanning segment; it reads IFNVADSYLTVGVILLVICLW.

This sequence belongs to the peptidase A8 family.

The protein localises to the cell membrane. The enzyme catalyses Release of signal peptides from bacterial membrane prolipoproteins. Hydrolyzes -Xaa-Yaa-Zaa-|-(S,diacylglyceryl)Cys-, in which Xaa is hydrophobic (preferably Leu), and Yaa (Ala or Ser) and Zaa (Gly or Ala) have small, neutral side chains.. It participates in protein modification; lipoprotein biosynthesis (signal peptide cleavage). Its function is as follows. This protein specifically catalyzes the removal of signal peptides from prolipoproteins. The sequence is that of Lipoprotein signal peptidase from Streptococcus pyogenes serotype M3 (strain ATCC BAA-595 / MGAS315).